The primary structure comprises 226 residues: Thymidylate kinase (226 aa).

20 to 27 (GGEGAGKS) provides a ligand contact to ATP.

It belongs to the thymidylate kinase family.

It carries out the reaction dTMP + ATP = dTDP + ADP. Functionally, phosphorylation of dTMP to form dTDP in both de novo and salvage pathways of dTTP synthesis. This chain is Thymidylate kinase, found in Bradyrhizobium sp. (strain BTAi1 / ATCC BAA-1182).